The primary structure comprises 278 residues: MTEAFARAKINLTLHVTGQRPDGYHLLDSLVVFADVGDRVRAEPAEALSLAITGPQAANLPVADDNLVLRAARTLGGQGARLTLEKHLPVASGIGGGSADAAAALVALARLWQVPLPDPAAVLKLGADVPVCLEGRAVRMAGVGEILTPLAAPLPEAWLVLANPGVSVPTPPVFKALARRDNPPMPDDLPGWPTVESLAAFLATQRNDLEPPAIALAPEIARTRAALAAQPGCLLARMSGSGATCFGLFAAEEAARAAAEAIGAEHPGWWVAPARMVG.

K9 is an active-site residue. 89–99 (PVASGIGGGSA) serves as a coordination point for ATP. The active site involves D128.

It belongs to the GHMP kinase family. IspE subfamily.

The enzyme catalyses 4-CDP-2-C-methyl-D-erythritol + ATP = 4-CDP-2-C-methyl-D-erythritol 2-phosphate + ADP + H(+). Its pathway is isoprenoid biosynthesis; isopentenyl diphosphate biosynthesis via DXP pathway; isopentenyl diphosphate from 1-deoxy-D-xylulose 5-phosphate: step 3/6. Functionally, catalyzes the phosphorylation of the position 2 hydroxy group of 4-diphosphocytidyl-2C-methyl-D-erythritol. The sequence is that of 4-diphosphocytidyl-2-C-methyl-D-erythritol kinase from Cereibacter sphaeroides (strain ATCC 17029 / ATH 2.4.9) (Rhodobacter sphaeroides).